A 436-amino-acid polypeptide reads, in one-letter code: Trigger factor (436 aa).

The PPIase FKBP-type domain maps to T163–P248.

The protein belongs to the FKBP-type PPIase family. Tig subfamily.

It localises to the cytoplasm. It carries out the reaction [protein]-peptidylproline (omega=180) = [protein]-peptidylproline (omega=0). In terms of biological role, involved in protein export. Acts as a chaperone by maintaining the newly synthesized protein in an open conformation. Functions as a peptidyl-prolyl cis-trans isomerase. This Laribacter hongkongensis (strain HLHK9) protein is Trigger factor.